The following is a 965-amino-acid chain: Argonaute protein wago-4 (965 aa).

Positions 1–34 (MPALPPVYTPSGAPSSVHAPPAVPPVPVPTQPLR) are disordered. A compositionally biased stretch (low complexity) spans 10 to 20 (PSGAPSSVHAP). Over residues 21 to 30 (PAVPPVPVPT) the composition is skewed to pro residues. A PAZ domain is found at 318 to 428 (PILDKLKEIT…YPMELLKISS (111 aa)). Residues 594–924 (TFVFIITDDS…YAKRGRNLWN (331 aa)) enclose the Piwi domain.

Belongs to the argonaute family. WAGO subfamily. As to quaternary structure, interacts with znfx-1; the interaction promotes the transmission of epigenetic information across generations. May interact with mina-1. Expressed in the hermaphrodite germline and in oocytes. Expressed at a low level in the male germline. Not expressed in the soma of hermaphrodites or males.

Its subcellular location is the cytoplasm. The protein resides in the perinuclear region. It is found in the cytoplasmic granule. Its function is as follows. Argonaute protein which is involved in the endogenous small interfering RNA (endo-siRNA) pathway and is required for RNA-mediated gene silencing (RNAi) in the germline. Interacts with secondary 22G-RNAs, which are RNA-dependent RNA polymerase-derived endo-siRNAs, typically 22 nucleotides in length with a 5'guanosine residue. Also interacts with the mRNA targets of 22G-RNAs. Associates with znfx-1 to mediate small RNA-directed transgenerational epigenetic inheritance of both germline- and soma-expressed genes. The protein is Argonaute protein wago-4 of Caenorhabditis elegans.